Here is a 529-residue protein sequence, read N- to C-terminus: Bifunctional purine biosynthesis protein PurH (529 aa).

The MGS-like domain occupies 1 to 148 (MNNARPIRRA…KNHKDTTIIV (148 aa)).

The protein belongs to the PurH family.

It catalyses the reaction (6R)-10-formyltetrahydrofolate + 5-amino-1-(5-phospho-beta-D-ribosyl)imidazole-4-carboxamide = 5-formamido-1-(5-phospho-D-ribosyl)imidazole-4-carboxamide + (6S)-5,6,7,8-tetrahydrofolate. The enzyme catalyses IMP + H2O = 5-formamido-1-(5-phospho-D-ribosyl)imidazole-4-carboxamide. The protein operates within purine metabolism; IMP biosynthesis via de novo pathway; 5-formamido-1-(5-phospho-D-ribosyl)imidazole-4-carboxamide from 5-amino-1-(5-phospho-D-ribosyl)imidazole-4-carboxamide (10-formyl THF route): step 1/1. Its pathway is purine metabolism; IMP biosynthesis via de novo pathway; IMP from 5-formamido-1-(5-phospho-D-ribosyl)imidazole-4-carboxamide: step 1/1. The protein is Bifunctional purine biosynthesis protein PurH of Shewanella pealeana (strain ATCC 700345 / ANG-SQ1).